A 308-amino-acid chain; its full sequence is Glutaminase (308 aa).

Substrate-binding residues include Ser-68, Asn-118, Glu-162, Asn-169, Tyr-193, Tyr-244, and Val-262.

It belongs to the glutaminase family. Homotetramer.

The catalysed reaction is L-glutamine + H2O = L-glutamate + NH4(+). In Hahella chejuensis (strain KCTC 2396), this protein is Glutaminase.